A 1921-amino-acid chain; its full sequence is Endoribonuclease Dicer (1921 aa).

The Helicase ATP-binding domain occupies 51-227 (LLEAALDHNT…ELEEKIKKLE (177 aa)). An ATP-binding site is contributed by 64 to 71 (LNTGSGKT). Residues 175–178 (DECH) carry the DECH box motif. The interval 409 to 433 (YVSWSDSEDDDEDEEIEEKEKPETN) is disordered. The span at 414 to 425 (DSEDDDEDEEIE) shows a compositional bias: acidic residues. A Helicase C-terminal domain is found at 433-602 (NFPSPFTNIL…SVDTSETETE (170 aa)). The region spanning 630 to 722 (AIGHINRYCA…MPVGKETVKY (93 aa)) is the Dicer dsRNA-binding fold domain. A disordered region spans residues 727–746 (DLHDEEETSVPGRPGSTKRR). The 148-residue stretch at 895–1042 (KFMEDIEKSE…LVPELCAIHP (148 aa)) folds into the PAZ domain. Residues 1270–1289 (NLSKDKVDSEKNTSSGYSSK) form a disordered region. 2 RNase III domains span residues 1277–1404 (DSEK…EETT) and 1665–1823 (FENF…MDSG). Positions 1317, 1396, 1399, and 1704 each coordinate Mg(2+). The tract at residues 1782–1801 (QGMDSELRRSEEDEEKEEDI) is disordered. Mg(2+) is bound by residues Asp-1809 and Glu-1812. One can recognise a DRBM domain in the interval 1848-1913 (VPRSPVRELL…ARRALRSLKA (66 aa)).

Belongs to the helicase family. Dicer subfamily. As to quaternary structure, component of the RISC loading complex (RLC), or micro-RNA (miRNA) loading complex (miRLC), which is composed of DICER1, AGO2 and TARBP2; DICER1 and TARBP2 are required to process precursor miRNAs (pre-miRNAs) to mature miRNAs and then load them onto AGO2. Note that the trimeric RLC/miRLC is also referred to as RISC. The cofactor is Mg(2+). Mn(2+) is required as a cofactor.

It localises to the cytoplasm. It carries out the reaction Endonucleolytic cleavage to 5'-phosphomonoester.. Its function is as follows. Double-stranded RNA (dsRNA) endoribonuclease playing a central role in short dsRNA-mediated post-transcriptional gene silencing. Cleaves naturally occurring long dsRNAs and short hairpin pre-microRNAs (miRNA) into fragments of twenty-one to twenty-three nucleotides with 3' overhang of two nucleotides, producing respectively short interfering RNAs (siRNA) and mature microRNAs. SiRNAs and miRNAs serve as guide to direct the RNA-induced silencing complex (RISC) to complementary RNAs to degrade them or prevent their translation. Gene silencing mediated by siRNAs, also called RNA interference, controls the elimination of transcripts from mobile and repetitive DNA elements of the genome but also the degradation of exogenous RNA of viral origin for instance. The miRNA pathway on the other side is a mean to specifically regulate the expression of target genes. The chain is Endoribonuclease Dicer (DICER1) from Gallus gallus (Chicken).